The chain runs to 93 residues: DNA-directed RNA polymerase subunit omega (93 aa).

The protein belongs to the RNA polymerase subunit omega family. In terms of assembly, the RNAP catalytic core consists of 2 alpha, 1 beta, 1 beta' and 1 omega subunit. When a sigma factor is associated with the core the holoenzyme is formed, which can initiate transcription.

The enzyme catalyses RNA(n) + a ribonucleoside 5'-triphosphate = RNA(n+1) + diphosphate. Promotes RNA polymerase assembly. Latches the N- and C-terminal regions of the beta' subunit thereby facilitating its interaction with the beta and alpha subunits. This Shewanella loihica (strain ATCC BAA-1088 / PV-4) protein is DNA-directed RNA polymerase subunit omega.